The chain runs to 412 residues: FAD-dependent monooxygenase nscC (412 aa).

The signal sequence occupies residues 1–21; it reads MGKQQETILIIGAGIAGLTTS. FAD contacts are provided by Glu35 and Ala46. N-linked (GlcNAc...) asparagine glycosylation is present at Asn92. Arg119 lines the FAD pocket. Residues Asn170 and Asn231 are each glycosylated (N-linked (GlcNAc...) asparagine). Positions 326 and 339 each coordinate FAD.

It belongs to the paxM FAD-dependent monooxygenase family. The cofactor is FAD.

Its pathway is secondary metabolite biosynthesis. FAD-dependent monooxygenase; part of the gene cluster that mediates the biosynthesis of neosartoricin B, a prenylated anthracenone that probably exhibits T-cell antiproliferative activity, suggestive of a physiological role as an immunosuppressive agent. The non-reducing polyketide synthase nscA probably synthesizes and cyclizes the decaketide backbone. The hydrolase nscB then mediates the product release through hydrolysis followed by spontaneous decarboxylation. The prenyltransferase nscD catalyzes the addition of the dimethylallyl group to the aromatic C5. The FAD-dependent monooxygenase nscC is then responsible for the stereospecific hydroxylation at C2. Neosartoricin B can be converted into two additional compounds neosartoricins C and D. Neosartoricin C is a spirocyclic compound that is cyclized through the attack of C3 hydroxyl on C14, followed by dehydration. On the other hand, neosartoricin D is a further cyclized compound in which attack of C2 on C14 in neosartoricin C results in the formation of the acetal-containing dioxabicyclo-octanone ring. Both of these compounds are novel and possibly represent related metabolites of the gene cluster. The sequence is that of FAD-dependent monooxygenase nscC from Trichophyton verrucosum (strain HKI 0517).